The chain runs to 55 residues: Large ribosomal subunit protein bL33 (55 aa).

This sequence belongs to the bacterial ribosomal protein bL33 family.

In Roseobacter denitrificans (strain ATCC 33942 / OCh 114) (Erythrobacter sp. (strain OCh 114)), this protein is Large ribosomal subunit protein bL33.